The sequence spans 324 residues: Beta-ketoacyl-[acyl-carrier-protein] synthase III (324 aa).

Active-site residues include Cys114 and His251. The ACP-binding stretch occupies residues 252-256; the sequence is QANLR. Asn281 is a catalytic residue.

This sequence belongs to the thiolase-like superfamily. FabH family. Homodimer.

The protein resides in the cytoplasm. The enzyme catalyses malonyl-[ACP] + acetyl-CoA + H(+) = 3-oxobutanoyl-[ACP] + CO2 + CoA. Its pathway is lipid metabolism; fatty acid biosynthesis. Catalyzes the condensation reaction of fatty acid synthesis by the addition to an acyl acceptor of two carbons from malonyl-ACP. Catalyzes the first condensation reaction which initiates fatty acid synthesis and may therefore play a role in governing the total rate of fatty acid production. Possesses both acetoacetyl-ACP synthase and acetyl transacylase activities. Its substrate specificity determines the biosynthesis of branched-chain and/or straight-chain of fatty acids. The chain is Beta-ketoacyl-[acyl-carrier-protein] synthase III from Dinoroseobacter shibae (strain DSM 16493 / NCIMB 14021 / DFL 12).